The primary structure comprises 468 residues: Argininosuccinate lyase (468 aa).

Belongs to the lyase 1 family. Argininosuccinate lyase subfamily.

It localises to the cytoplasm. The catalysed reaction is 2-(N(omega)-L-arginino)succinate = fumarate + L-arginine. Its pathway is amino-acid biosynthesis; L-arginine biosynthesis; L-arginine from L-ornithine and carbamoyl phosphate: step 3/3. This is Argininosuccinate lyase from Cutibacterium acnes (strain DSM 16379 / KPA171202) (Propionibacterium acnes).